The sequence spans 454 residues: Uridine kinase (454 aa).

28–35 (GPSGSGKT) contacts ATP.

It belongs to the uridine kinase family.

It is found in the cytoplasm. Its subcellular location is the nucleus. It carries out the reaction uridine + ATP = UMP + ADP + H(+). The enzyme catalyses cytidine + ATP = CMP + ADP + H(+). It functions in the pathway pyrimidine metabolism; CTP biosynthesis via salvage pathway; CTP from cytidine: step 1/3. It participates in pyrimidine metabolism; UMP biosynthesis via salvage pathway; UMP from uridine: step 1/1. In terms of biological role, catalyzes the conversion of uridine into UMP and cytidine into CMP in the pyrimidine salvage pathway. This Schizosaccharomyces pombe (strain 972 / ATCC 24843) (Fission yeast) protein is Uridine kinase (urk1).